Consider the following 227-residue polypeptide: Esterase OVCA2 (227 aa).

Active-site charge relay system residues include Ser119, Asp179, and His206.

The protein belongs to the LovG family.

The enzyme catalyses a carboxylic ester + H2O = an alcohol + a carboxylate + H(+). In terms of biological role, exhibits ester hydrolase activity with a strong preference for long-chain alkyl ester substrates and high selectivity against a variety of short, branched, and substituted esters. Is able to hydrolyze ester bonds within a wide range of p-nitrophenyl derivatives (C2-C14) in vitro, with a strong preference toward substrates of &gt;8 carbons. The chain is Esterase OVCA2 (OVCA2) from Bos taurus (Bovine).